The chain runs to 293 residues: N-acetylneuraminate lyase (293 aa).

S47 and T48 together coordinate aceneuramate. The Proton donor role is filled by Y136. K164 serves as the catalytic Schiff-base intermediate with substrate. Positions 166, 188, 190, 191, and 207 each coordinate aceneuramate.

The protein belongs to the DapA family. NanA subfamily. As to quaternary structure, homotetramer.

The protein localises to the cytoplasm. It catalyses the reaction aceneuramate = aldehydo-N-acetyl-D-mannosamine + pyruvate. Its pathway is amino-sugar metabolism; N-acetylneuraminate degradation; D-fructose 6-phosphate from N-acetylneuraminate: step 1/5. Catalyzes the reversible aldol cleavage of N-acetylneuraminic acid (sialic acid; Neu5Ac) to form pyruvate and N-acetylmannosamine (ManNAc) via a Schiff base intermediate. The protein is N-acetylneuraminate lyase of Haemophilus influenzae (strain ATCC 51907 / DSM 11121 / KW20 / Rd).